The sequence spans 185 residues: Elongation factor P (185 aa).

It belongs to the elongation factor P family.

The protein localises to the cytoplasm. It functions in the pathway protein biosynthesis; polypeptide chain elongation. Functionally, involved in peptide bond synthesis. Stimulates efficient translation and peptide-bond synthesis on native or reconstituted 70S ribosomes in vitro. Probably functions indirectly by altering the affinity of the ribosome for aminoacyl-tRNA, thus increasing their reactivity as acceptors for peptidyl transferase. This is Elongation factor P from Bacillus pumilus (strain SAFR-032).